A 96-amino-acid chain; its full sequence is Large ribosomal subunit protein uL23 (96 aa).

Belongs to the universal ribosomal protein uL23 family. As to quaternary structure, part of the 50S ribosomal subunit. Contacts protein L29, and trigger factor when it is bound to the ribosome.

Functionally, one of the early assembly proteins it binds 23S rRNA. One of the proteins that surrounds the polypeptide exit tunnel on the outside of the ribosome. Forms the main docking site for trigger factor binding to the ribosome. This chain is Large ribosomal subunit protein uL23, found in Brevibacillus brevis (strain 47 / JCM 6285 / NBRC 100599).